A 188-amino-acid polypeptide reads, in one-letter code: MTVGVLSLQGSFYEHLFILSRLNTDHIQVKTSEDLSRVTRLIIPGGESTAMLALTQKSGLFDLVRDRIMSGMPVYGTCAGMIMLSTFVEDFPNQKTLSCLDIAVRRNAFGRQINSFESEVSFLNSKITVPFIRAPKITQIGEGVDVLSRLESGDIVAVRQGNVMATAFHPELTGGAAVHEYFLHLGLE.

L-glutamine is bound at residue 46–48 (GES). C78 acts as the Nucleophile in catalysis. Residues R106 and 132 to 133 (IR) each bind L-glutamine. Residues H169 and E171 each act as charge relay system in the active site.

It belongs to the glutaminase PdxT/SNO family. As to quaternary structure, in the presence of PdxS, forms a dodecamer of heterodimers. Only shows activity in the heterodimer.

It catalyses the reaction aldehydo-D-ribose 5-phosphate + D-glyceraldehyde 3-phosphate + L-glutamine = pyridoxal 5'-phosphate + L-glutamate + phosphate + 3 H2O + H(+). The enzyme catalyses L-glutamine + H2O = L-glutamate + NH4(+). Its pathway is cofactor biosynthesis; pyridoxal 5'-phosphate biosynthesis. In terms of biological role, catalyzes the hydrolysis of glutamine to glutamate and ammonia as part of the biosynthesis of pyridoxal 5'-phosphate. The resulting ammonia molecule is channeled to the active site of PdxS. The polypeptide is Pyridoxal 5'-phosphate synthase subunit PdxT (Tropheryma whipplei (strain Twist) (Whipple's bacillus)).